A 206-amino-acid chain; its full sequence is Large ribosomal subunit protein mL40 (206 aa).

Residues 1–46 constitute a mitochondrion transit peptide; the sequence is MTASVLRSISLALRPTSGLLGTWQTQLRETHQRASLLSFWELIPMR. The disordered stretch occupies residues 168–192; that stretch reads LFPFEKEGPHYTPPIPNYQPPEGRY.

Belongs to the mitochondrion-specific ribosomal protein mL40 family. Component of the mitochondrial large ribosomal subunit (mt-LSU). Mature mammalian 55S mitochondrial ribosomes consist of a small (28S) and a large (39S) subunit. The 28S small subunit contains a 12S ribosomal RNA (12S mt-rRNA) and 30 different proteins. The 39S large subunit contains a 16S rRNA (16S mt-rRNA), a copy of mitochondrial valine transfer RNA (mt-tRNA(Val)), which plays an integral structural role, and 52 different proteins. mL40 binds to the major groove of the anticodon stem of mt-tRNA(Val) in the central protuberance. As to expression, ubiquitous.

It localises to the mitochondrion. This chain is Large ribosomal subunit protein mL40 (MRPL40), found in Homo sapiens (Human).